A 403-amino-acid chain; its full sequence is MSILKLVKGVLYGEGEHHEKPKKTHIVIIGAGLTGLLLAQGLRKLNARLEAEGQSAPFTFSIHERDESSFYRGGGFSLTIHWALQQLYDILPEELSARIFECVGNPDAIKNGQMGSFTFLNLRTGEPALKTTIPPGWKGARMSRVRFLQLLMTDLDIHYSHRLSQITFPTDNTVRAHFENGDQETGNLLIGADGANSVVRRFVYGAENSKNTQLPIRMLNCRSEYPLEELEACLRVDPHLFHAGDPVQDGYFMFAFLDMPPAGSKNGKAGVQLTISWPYESGYLGQEAPSDPPTELPEQLAWLKHMAKHWANPVHDLIYGMPDDSIVRVIRVQEWMPNDANRRPTDGRITTVGDAAHLMTSFRGENANHGVVDVAKLLALLAPSGNKPTDLREVPVPVSTDDA.

FAD-binding residues include G75, R144, D354, and A367.

This sequence belongs to the paxM FAD-dependent monooxygenase family. It depends on FAD as a cofactor.

It functions in the pathway secondary metabolite biosynthesis. In terms of biological role, FAD-dependent monooxygenase; part of the gene cluster that mediates the biosynthesis of azaterrilone A and other azaphilones, a class of fungal metabolites characterized by a highly oxygenated pyrano-quinone bicyclic core and exhibiting a broad range of bioactivities. The first step of the pathway begins with the non-reducing polyketide synthase tazA that assembles one acetyl-CoA starter unit, five malonyl-CoA units, and catalyzes a series of Claisen condensations, methylation, PT-mediated cyclization, and finally releases the first hexaketide precursor through the R-domain. The tazA product then undergoes reduction on its terminal ketone and the following pyran-ring formation by yet undetermined enzyme(s). Dehydration and enoyl reduction, possibly involving the trans-enoyl reductase tazE leads to the next intermediate. TazD is predicted as an acetyltransferase and might catalyze the acetylation steps leading to the synthesis of azaterrilone A. Azaterrilone A is not the final product of the taz pathway and both the highly reducing polyketide synthase tazB and the dual enzyme tazHJ catalyze late steps of the pathway, leading to the production of the 2 final stereoisomers that contain additional polyketide modification whose structures have still to be determined. This chain is FAD-dependent monooxygenase tazP, found in Aspergillus terreus (strain NIH 2624 / FGSC A1156).